Consider the following 980-residue polypeptide: Alanine--tRNA ligase, mitochondrial (980 aa).

Residues 1-23 constitute a mitochondrion transit peptide; it reads MAVALAAAAGKLRRAIGRSCPWQ. ATP-binding positions include Arg-105, His-123, Trp-205, and 235–237; that span reads LWN. Residues Asn-237 and Asp-260 each contribute to the L-alanine site. Gly-264 lines the ATP pocket. Residues His-627, His-631, Cys-744, and His-748 each coordinate Zn(2+).

The protein belongs to the class-II aminoacyl-tRNA synthetase family. As to quaternary structure, monomer. Zn(2+) serves as cofactor.

It is found in the mitochondrion. The catalysed reaction is tRNA(Ala) + L-alanine + ATP = L-alanyl-tRNA(Ala) + AMP + diphosphate. It catalyses the reaction (S)-lactate + ATP + H(+) = (S)-lactoyl-AMP + diphosphate. The enzyme catalyses (S)-lactoyl-AMP + L-lysyl-[protein] = N(6)-[(S)-lactoyl]-L-lysyl-[protein] + AMP + 2 H(+). In terms of biological role, catalyzes the attachment of alanine to tRNA(Ala) in a two-step reaction: alanine is first activated by ATP to form Ala-AMP and then transferred to the acceptor end of tRNA(Ala). Also edits incorrectly charged tRNA(Ala) via its editing domain. In presence of high levels of lactate, also acts as a protein lactyltransferase that mediates lactylation of lysine residues in target proteins, such as CGAS. Acts as an inhibitor of cGAS/STING signaling by catalyzing lactylation of CGAS, preventing the formation of liquid-like droplets in which CGAS is activated. In Mus musculus (Mouse), this protein is Alanine--tRNA ligase, mitochondrial (Aars2).